The following is a 270-amino-acid chain: UPF0354 protein BCG9842_B0431 (270 aa).

The protein belongs to the UPF0354 family.

This Bacillus cereus (strain G9842) protein is UPF0354 protein BCG9842_B0431.